A 339-amino-acid chain; its full sequence is MIDFKSIIGKVATGATLTRDEATAAFDAMMSGEATPSQMGALLMGLRVRGETVDEIAGAVSAMRAKMLTVTAPPDAVDVVGTGGDGSGSVNVSTCAAFIVAGCGAPVAKHGNRALSSRSGAADVLAALGVKIDITPDQVGRCIAEAGIGFMFAPTHHPAMKNVGPTRVELATRTIFNMLGPLSNPAGVKRQMVGVFSRQWVQPLAQVLKNLGSEAVWVVHGSDGLDEITISGPTFVAALKDGEITTFEITPEDAGLPRAPAESLKGGDAEANAAALKGVLQGKPSPYRDVALLNAGATLIVAGRAGDLKEAVALGAQSIDSGAAAARLAKLIAVSNTAE.

Residues G81, 84 to 85 (GD), S89, 91 to 94 (NVST), 109 to 117 (KHGNRALSS), and A121 each bind 5-phospho-alpha-D-ribose 1-diphosphate. An anthranilate-binding site is contributed by G81. S93 lines the Mg(2+) pocket. N112 is a binding site for anthranilate. R167 contributes to the anthranilate binding site. Positions 226 and 227 each coordinate Mg(2+).

It belongs to the anthranilate phosphoribosyltransferase family. As to quaternary structure, homodimer. Mg(2+) is required as a cofactor.

The catalysed reaction is N-(5-phospho-beta-D-ribosyl)anthranilate + diphosphate = 5-phospho-alpha-D-ribose 1-diphosphate + anthranilate. Its pathway is amino-acid biosynthesis; L-tryptophan biosynthesis; L-tryptophan from chorismate: step 2/5. Functionally, catalyzes the transfer of the phosphoribosyl group of 5-phosphorylribose-1-pyrophosphate (PRPP) to anthranilate to yield N-(5'-phosphoribosyl)-anthranilate (PRA). This is Anthranilate phosphoribosyltransferase from Rhodopseudomonas palustris (strain BisA53).